The chain runs to 96 residues: Co-chaperonin GroES (96 aa).

It belongs to the GroES chaperonin family. As to quaternary structure, heptamer of 7 subunits arranged in a ring. Interacts with the chaperonin GroEL.

The protein localises to the cytoplasm. Its function is as follows. Together with the chaperonin GroEL, plays an essential role in assisting protein folding. The GroEL-GroES system forms a nano-cage that allows encapsulation of the non-native substrate proteins and provides a physical environment optimized to promote and accelerate protein folding. GroES binds to the apical surface of the GroEL ring, thereby capping the opening of the GroEL channel. In Cupriavidus necator (strain ATCC 17699 / DSM 428 / KCTC 22496 / NCIMB 10442 / H16 / Stanier 337) (Ralstonia eutropha), this protein is Co-chaperonin GroES.